The sequence spans 1237 residues: Putative structural protein VP3 (1237 aa).

The PPPDE domain maps to 963 to 1178 (GFLDKRVGDA…WDVSTAARMQ (216 aa)). Residues His1001 and Cys1149 contribute to the active site.

The protein localises to the virion. The sequence is that of Putative structural protein VP3 (S3) from Lymantria dispar cypovirus 1 (isolate Rao) (LdCPV-1).